A 377-amino-acid polypeptide reads, in one-letter code: Tryptophan--tRNA ligase, mitochondrial (377 aa).

Residues glutamine 21 and 28 to 31 contribute to the ATP site; that span reads HLGN. Residues 22 to 31 carry the 'HIGH' region motif; it reads PTSSALHLGN. Residue aspartate 181 participates in L-tryptophan binding. ATP contacts are provided by residues 193 to 195, 242 to 246, and lysine 245; these read GED and KMSKS. The short motif at 242–246 is the 'KMSKS' region element; sequence KMSKS.

Belongs to the class-I aminoacyl-tRNA synthetase family.

Its subcellular location is the mitochondrion matrix. The catalysed reaction is tRNA(Trp) + L-tryptophan + ATP = L-tryptophyl-tRNA(Trp) + AMP + diphosphate + H(+). The chain is Tryptophan--tRNA ligase, mitochondrial (wars2) from Dictyostelium discoideum (Social amoeba).